A 691-amino-acid chain; its full sequence is Elongation factor G (691 aa).

Positions 8 to 283 (EKQRNIGIMA…AVVQYLPSPL (276 aa)) constitute a tr-type G domain. Residues 17 to 24 (AHIDAGKT), 81 to 85 (DTPGH), and 135 to 138 (NKMD) each bind GTP.

This sequence belongs to the TRAFAC class translation factor GTPase superfamily. Classic translation factor GTPase family. EF-G/EF-2 subfamily.

The protein resides in the cytoplasm. Functionally, catalyzes the GTP-dependent ribosomal translocation step during translation elongation. During this step, the ribosome changes from the pre-translocational (PRE) to the post-translocational (POST) state as the newly formed A-site-bound peptidyl-tRNA and P-site-bound deacylated tRNA move to the P and E sites, respectively. Catalyzes the coordinated movement of the two tRNA molecules, the mRNA and conformational changes in the ribosome. This Lawsonia intracellularis (strain PHE/MN1-00) protein is Elongation factor G.